Consider the following 560-residue polypeptide: Dihydroxy-acid dehydratase (560 aa).

Residue aspartate 78 participates in Mg(2+) binding. Cysteine 119 is a binding site for [2Fe-2S] cluster. 2 residues coordinate Mg(2+): aspartate 120 and lysine 121. Lysine 121 is modified (N6-carboxylysine). Residue cysteine 192 coordinates [2Fe-2S] cluster. Mg(2+) is bound at residue glutamate 446. The active-site Proton acceptor is the serine 472.

Belongs to the IlvD/Edd family. As to quaternary structure, homodimer. It depends on [2Fe-2S] cluster as a cofactor. Mg(2+) is required as a cofactor.

The enzyme catalyses (2R)-2,3-dihydroxy-3-methylbutanoate = 3-methyl-2-oxobutanoate + H2O. It carries out the reaction (2R,3R)-2,3-dihydroxy-3-methylpentanoate = (S)-3-methyl-2-oxopentanoate + H2O. It participates in amino-acid biosynthesis; L-isoleucine biosynthesis; L-isoleucine from 2-oxobutanoate: step 3/4. It functions in the pathway amino-acid biosynthesis; L-valine biosynthesis; L-valine from pyruvate: step 3/4. In terms of biological role, functions in the biosynthesis of branched-chain amino acids. Catalyzes the dehydration of (2R,3R)-2,3-dihydroxy-3-methylpentanoate (2,3-dihydroxy-3-methylvalerate) into 2-oxo-3-methylpentanoate (2-oxo-3-methylvalerate) and of (2R)-2,3-dihydroxy-3-methylbutanoate (2,3-dihydroxyisovalerate) into 2-oxo-3-methylbutanoate (2-oxoisovalerate), the penultimate precursor to L-isoleucine and L-valine, respectively. This is Dihydroxy-acid dehydratase from Anaeromyxobacter sp. (strain K).